We begin with the raw amino-acid sequence, 578 residues long: Proline--tRNA ligase (578 aa).

It belongs to the class-II aminoacyl-tRNA synthetase family. ProS type 1 subfamily. Homodimer.

Its subcellular location is the cytoplasm. The enzyme catalyses tRNA(Pro) + L-proline + ATP = L-prolyl-tRNA(Pro) + AMP + diphosphate. Functionally, catalyzes the attachment of proline to tRNA(Pro) in a two-step reaction: proline is first activated by ATP to form Pro-AMP and then transferred to the acceptor end of tRNA(Pro). As ProRS can inadvertently accommodate and process non-cognate amino acids such as alanine and cysteine, to avoid such errors it has two additional distinct editing activities against alanine. One activity is designated as 'pretransfer' editing and involves the tRNA(Pro)-independent hydrolysis of activated Ala-AMP. The other activity is designated 'posttransfer' editing and involves deacylation of mischarged Ala-tRNA(Pro). The misacylated Cys-tRNA(Pro) is not edited by ProRS. This is Proline--tRNA ligase from Burkholderia ambifaria (strain ATCC BAA-244 / DSM 16087 / CCUG 44356 / LMG 19182 / AMMD) (Burkholderia cepacia (strain AMMD)).